Reading from the N-terminus, the 781-residue chain is Coiled-coil and C2 domain-containing protein 1-like (781 aa).

Disordered regions lie at residues 32–63 (MGRV…NVPG), 94–134 (ELNG…APNS), 187–296 (ESEI…AKES), 313–373 (CSAD…TEGN), and 403–447 (GELP…VEGK). Residues 37–59 (RPAAPARGAPPAARGRPAPAAPA) are compositionally biased toward low complexity. Over residues 98–107 (LVGGGGGGGA) the composition is skewed to gly residues. Positions 108–118 (APTVPTRAAPR) are enriched in low complexity. Composition is skewed to pro residues over residues 119–129 (APGPSGPPPSA) and 204–222 (PLPP…PAPP). Residues 244 to 256 (APAPTAAAPPATK) are compositionally biased toward low complexity. Positions 269-280 (ILHHRRDLHKQN) are enriched in basic residues. Residues 285 to 296 (IADKDKESAKES) show a composition bias toward basic and acidic residues. A compositionally biased stretch (pro residues) spans 324–341 (PPSPPPYRKPAPPQPQAP). The segment covering 363 to 373 (KMAEKAKTEGN) has biased composition (basic and acidic residues). The C2 domain maps to 605 to 741 (YEMRQIPSAD…EHSAEMEESL (137 aa)).

The protein belongs to the CC2D1 family.

The protein is Coiled-coil and C2 domain-containing protein 1-like of Caenorhabditis elegans.